The following is a 196-amino-acid chain: Oplophorus-luciferin 2-monooxygenase catalytic subunit (196 aa).

Positions 1–27 (MAYSTLFIIALTAVVTQASSTQKSNLT) are cleaved as a signal peptide.

Heterotetramer of a catalytic 19 kDa and a non-catalytic 35 kDa subunit.

Its subcellular location is the secreted. The catalysed reaction is coelenterazine + O2 = coelenteramide + hnu + CO2. With respect to regulation, inhibited by micromolar Cu(2+). Catalytic subunit of oplophorus-luciferin 2-monooxygenase. Oxidoreductase that converts coelenterazine (the oplophorus luciferin) to coelenteramide under emission of blue light with a maximum at 454 nm. Is also active with bisdeoxycoelenterazine. This chain is Oplophorus-luciferin 2-monooxygenase catalytic subunit, found in Oplophorus gracilirostris (Luminous shrimp).